A 526-amino-acid polypeptide reads, in one-letter code: Cholesterol side-chain cleavage enzyme, mitochondrial (526 aa).

Residues 1-36 (MLAKGLCLRSVLVKSCQPFLSPVWQGPGLATGNGAG) constitute a mitochondrion transit peptide. Residue Cys-459 coordinates heme.

It belongs to the cytochrome P450 family. In terms of assembly, interacts with FDX1/adrenodoxin. Heme serves as cofactor. As to expression, expressed in the kidney where it localizes to the distal convoluted tubule and the thick ascending limb of the loop of Henle (at protein level). In the ovary, highly expressed in interstitial cells (at protein level). Also expressed in adrenal gland and testis.

It is found in the mitochondrion inner membrane. The enzyme catalyses 6 reduced [adrenodoxin] + cholesterol + 3 O2 + 6 H(+) = 4-methylpentanal + pregnenolone + 6 oxidized [adrenodoxin] + 4 H2O. The catalysed reaction is 2 reduced [adrenodoxin] + cholesterol + O2 + 2 H(+) = (22R)-hydroxycholesterol + 2 oxidized [adrenodoxin] + H2O. It carries out the reaction (22R)-hydroxycholesterol + 2 reduced [adrenodoxin] + O2 + 2 H(+) = (20R,22R)-20,22-dihydroxycholesterol + 2 oxidized [adrenodoxin] + H2O. It catalyses the reaction (20R,22R)-20,22-dihydroxycholesterol + 2 reduced [adrenodoxin] + O2 + 2 H(+) = 4-methylpentanal + pregnenolone + 2 oxidized [adrenodoxin] + 2 H2O. It participates in lipid metabolism; C21-steroid hormone metabolism. Its pathway is steroid metabolism; cholesterol metabolism. Its function is as follows. A cytochrome P450 monooxygenase that catalyzes the side-chain hydroxylation and cleavage of cholesterol to pregnenolone, the precursor of most steroid hormones. Catalyzes three sequential oxidation reactions of cholesterol, namely the hydroxylation at C22 followed with the hydroxylation at C20 to yield 20R,22R-hydroxycholesterol that is further cleaved between C20 and C22 to yield the C21-steroid pregnenolone and 4-methylpentanal. Mechanistically, uses molecular oxygen inserting one oxygen atom into a substrate and reducing the second into a water molecule. Two electrons are provided by NADPH via a two-protein mitochondrial transfer system comprising flavoprotein FDXR (adrenodoxin/ferredoxin reductase) and nonheme iron-sulfur protein FDX1 or FDX2 (adrenodoxin/ferredoxin). This chain is Cholesterol side-chain cleavage enzyme, mitochondrial, found in Rattus norvegicus (Rat).